An 833-amino-acid polypeptide reads, in one-letter code: Leucine--tRNA ligase (833 aa).

The 'HIGH' region signature appears at 41–52 (PYPSGAGLHVGH). Residues 610–614 (KMSKS) carry the 'KMSKS' region motif. Lysine 613 lines the ATP pocket.

The protein belongs to the class-I aminoacyl-tRNA synthetase family.

The protein resides in the cytoplasm. It carries out the reaction tRNA(Leu) + L-leucine + ATP = L-leucyl-tRNA(Leu) + AMP + diphosphate. This is Leucine--tRNA ligase from Streptococcus equi subsp. zooepidemicus (strain H70).